The chain runs to 930 residues: Isoleucine--tRNA ligase (930 aa).

A 'HIGH' region motif is present at residues 57–67 (PYANGNIHVGH). Position 554 (E554) interacts with L-isoleucyl-5'-AMP. The 'KMSKS' region signature appears at 595–599 (KMSKS). Residue K598 coordinates ATP. Positions 888, 891, 908, and 911 each coordinate Zn(2+).

Belongs to the class-I aminoacyl-tRNA synthetase family. IleS type 1 subfamily. In terms of assembly, monomer. It depends on Zn(2+) as a cofactor.

It is found in the cytoplasm. The catalysed reaction is tRNA(Ile) + L-isoleucine + ATP = L-isoleucyl-tRNA(Ile) + AMP + diphosphate. Its function is as follows. Catalyzes the attachment of isoleucine to tRNA(Ile). As IleRS can inadvertently accommodate and process structurally similar amino acids such as valine, to avoid such errors it has two additional distinct tRNA(Ile)-dependent editing activities. One activity is designated as 'pretransfer' editing and involves the hydrolysis of activated Val-AMP. The other activity is designated 'posttransfer' editing and involves deacylation of mischarged Val-tRNA(Ile). The protein is Isoleucine--tRNA ligase of Streptococcus gordonii (strain Challis / ATCC 35105 / BCRC 15272 / CH1 / DL1 / V288).